A 198-amino-acid chain; its full sequence is Nicotinamidase 3 (198 aa).

It belongs to the isochorismatase family.

The enzyme catalyses nicotinamide + H2O = nicotinate + NH4(+). It participates in cofactor biosynthesis; nicotinate biosynthesis; nicotinate from nicotinamide: step 1/1. Catalyzes the deamidation of nicotinamide, an early step in the NAD(+) salvage pathway. Prevents the accumulation of intracellular nicotinamide, a known inhibitor of poly(ADP-ribose) polymerases (PARP enzymes). This chain is Nicotinamidase 3, found in Arabidopsis thaliana (Mouse-ear cress).